A 247-amino-acid polypeptide reads, in one-letter code: 2,5-diamino-6-ribosylamino-4(3H)-pyrimidinone 5'-phosphate reductase (247 aa).

NADP(+) contacts are provided by residues T75, D79, G165, and 187-191 (GASII).

It belongs to the HTP reductase family. In terms of assembly, homodimer.

It carries out the reaction 2,5-diamino-6-(1-D-ribitylamino)pyrimidin-4(3H)-one 5'-phosphate + NADP(+) = 2,5-diamino-6-(1-D-ribosylamino)pyrimidin-4(3H)-one 5'-phosphate + NADPH + H(+). The catalysed reaction is 2,5-diamino-6-(1-D-ribitylamino)pyrimidin-4(3H)-one 5'-phosphate + NAD(+) = 2,5-diamino-6-(1-D-ribosylamino)pyrimidin-4(3H)-one 5'-phosphate + NADH + H(+). It functions in the pathway cofactor biosynthesis; riboflavin biosynthesis. Its function is as follows. Catalyzes an early step in riboflavin biosynthesis, the NADPH-dependent reduction of the ribose side chain of 2,5-diamino-6-ribosylamino-4(3H)-pyrimidinone 5'-phosphate, yielding 2,5-diamino-6-ribitylamino-4(3H)-pyrimidinone 5'-phosphate. The protein is 2,5-diamino-6-ribosylamino-4(3H)-pyrimidinone 5'-phosphate reductase (RIB7) of Debaryomyces hansenii (strain ATCC 36239 / CBS 767 / BCRC 21394 / JCM 1990 / NBRC 0083 / IGC 2968) (Yeast).